A 202-amino-acid polypeptide reads, in one-letter code: Putative 3-methyladenine DNA glycosylase (202 aa).

The protein belongs to the DNA glycosylase MPG family.

This is Putative 3-methyladenine DNA glycosylase from Rhodopseudomonas palustris (strain BisB5).